A 400-amino-acid polypeptide reads, in one-letter code: Tryptophan synthase beta chain (400 aa).

K92 carries the N6-(pyridoxal phosphate)lysine modification.

It belongs to the TrpB family. As to quaternary structure, tetramer of two alpha and two beta chains. Requires pyridoxal 5'-phosphate as cofactor.

It catalyses the reaction (1S,2R)-1-C-(indol-3-yl)glycerol 3-phosphate + L-serine = D-glyceraldehyde 3-phosphate + L-tryptophan + H2O. The protein operates within amino-acid biosynthesis; L-tryptophan biosynthesis; L-tryptophan from chorismate: step 5/5. The beta subunit is responsible for the synthesis of L-tryptophan from indole and L-serine. This Leptospira borgpetersenii serovar Hardjo-bovis (strain JB197) protein is Tryptophan synthase beta chain.